A 417-amino-acid chain; its full sequence is Serine hydroxymethyltransferase (417 aa).

Residues L121 and 125-127 (GHL) each bind (6S)-5,6,7,8-tetrahydrofolate. An N6-(pyridoxal phosphate)lysine modification is found at K230. 355–357 (SPF) contributes to the (6S)-5,6,7,8-tetrahydrofolate binding site.

Belongs to the SHMT family. As to quaternary structure, homodimer. Pyridoxal 5'-phosphate is required as a cofactor.

Its subcellular location is the cytoplasm. The enzyme catalyses (6R)-5,10-methylene-5,6,7,8-tetrahydrofolate + glycine + H2O = (6S)-5,6,7,8-tetrahydrofolate + L-serine. It participates in one-carbon metabolism; tetrahydrofolate interconversion. The protein operates within amino-acid biosynthesis; glycine biosynthesis; glycine from L-serine: step 1/1. In terms of biological role, catalyzes the reversible interconversion of serine and glycine with tetrahydrofolate (THF) serving as the one-carbon carrier. This reaction serves as the major source of one-carbon groups required for the biosynthesis of purines, thymidylate, methionine, and other important biomolecules. Also exhibits THF-independent aldolase activity toward beta-hydroxyamino acids, producing glycine and aldehydes, via a retro-aldol mechanism. The sequence is that of Serine hydroxymethyltransferase from Legionella pneumophila subsp. pneumophila (strain Philadelphia 1 / ATCC 33152 / DSM 7513).